We begin with the raw amino-acid sequence, 286 residues long: Bifunctional protein FolD (286 aa).

Residues 166–168 (GQS), Ser191, and Ile232 contribute to the NADP(+) site.

It belongs to the tetrahydrofolate dehydrogenase/cyclohydrolase family. Homodimer.

It carries out the reaction (6R)-5,10-methylene-5,6,7,8-tetrahydrofolate + NADP(+) = (6R)-5,10-methenyltetrahydrofolate + NADPH. The catalysed reaction is (6R)-5,10-methenyltetrahydrofolate + H2O = (6R)-10-formyltetrahydrofolate + H(+). It participates in one-carbon metabolism; tetrahydrofolate interconversion. Functionally, catalyzes the oxidation of 5,10-methylenetetrahydrofolate to 5,10-methenyltetrahydrofolate and then the hydrolysis of 5,10-methenyltetrahydrofolate to 10-formyltetrahydrofolate. This chain is Bifunctional protein FolD, found in Alkalilimnicola ehrlichii (strain ATCC BAA-1101 / DSM 17681 / MLHE-1).